The primary structure comprises 485 residues: Ribulose bisphosphate carboxylase large chain (485 aa).

Residues 1–2 (MS) constitute a propeptide that is removed on maturation. N-acetylproline is present on Pro-3. Lys-14 is subject to N6,N6,N6-trimethyllysine. Positions 123 and 173 each coordinate substrate. The Proton acceptor role is filled by Lys-175. Substrate is bound at residue Lys-177. Residues Lys-201, Asp-203, and Glu-204 each coordinate Mg(2+). Position 201 is an N6-carboxylysine (Lys-201). The active-site Proton acceptor is the His-294. Positions 295, 327, and 379 each coordinate substrate.

This sequence belongs to the RuBisCO large chain family. Type I subfamily. As to quaternary structure, heterohexadecamer of 8 large chains and 8 small chains; disulfide-linked. The disulfide link is formed within the large subunit homodimers. Mg(2+) serves as cofactor. Post-translationally, the disulfide bond which can form in the large chain dimeric partners within the hexadecamer appears to be associated with oxidative stress and protein turnover.

It localises to the plastid. It is found in the chloroplast. It catalyses the reaction 2 (2R)-3-phosphoglycerate + 2 H(+) = D-ribulose 1,5-bisphosphate + CO2 + H2O. The enzyme catalyses D-ribulose 1,5-bisphosphate + O2 = 2-phosphoglycolate + (2R)-3-phosphoglycerate + 2 H(+). Its function is as follows. RuBisCO catalyzes two reactions: the carboxylation of D-ribulose 1,5-bisphosphate, the primary event in carbon dioxide fixation, as well as the oxidative fragmentation of the pentose substrate in the photorespiration process. Both reactions occur simultaneously and in competition at the same active site. In Helianthus annuus (Common sunflower), this protein is Ribulose bisphosphate carboxylase large chain.